The primary structure comprises 440 residues: UDP-N-acetylmuramoylalanine--D-glutamate ligase (440 aa).

128–134 (GTNGKTT) contributes to the ATP binding site.

It belongs to the MurCDEF family.

Its subcellular location is the cytoplasm. The catalysed reaction is UDP-N-acetyl-alpha-D-muramoyl-L-alanine + D-glutamate + ATP = UDP-N-acetyl-alpha-D-muramoyl-L-alanyl-D-glutamate + ADP + phosphate + H(+). The protein operates within cell wall biogenesis; peptidoglycan biosynthesis. Functionally, cell wall formation. Catalyzes the addition of glutamate to the nucleotide precursor UDP-N-acetylmuramoyl-L-alanine (UMA). This chain is UDP-N-acetylmuramoylalanine--D-glutamate ligase, found in Lawsonia intracellularis (strain PHE/MN1-00).